The sequence spans 92 residues: UPF0223 protein SSP1692 (92 aa).

Belongs to the UPF0223 family.

In Staphylococcus saprophyticus subsp. saprophyticus (strain ATCC 15305 / DSM 20229 / NCIMB 8711 / NCTC 7292 / S-41), this protein is UPF0223 protein SSP1692.